The chain runs to 354 residues: COP9 signalosome complex subunit 5 (354 aa).

Positions Val56–Asp193 constitute an MPN domain. Zn(2+) is bound by residues His139, His141, and Asp152. A JAMM motif motif is present at residues His139–Asp152. The interval Asp193–Ser212 is disordered.

The protein belongs to the peptidase M67A family. CSN5 subfamily. As to quaternary structure, component of the COP9 signalosome (CSN) complex.

Its subcellular location is the cytoplasm. It is found in the nucleus. Catalytic Component of the COP9 signalosome (CSN) complex that acts as an regulator of the ubiquitin (Ubl) conjugation pathway by mediating the deneddylation of the cullin subunit of SCF-type E3 ubiquitin-protein ligase complexes. The sequence is that of COP9 signalosome complex subunit 5 (RRI1) from Yarrowia lipolytica (strain CLIB 122 / E 150) (Yeast).